The sequence spans 3019 residues: Genome polyprotein (3019 aa).

Ser2 is subject to N-acetylserine; by host. The interaction with STAT1 stretch occupies residues 2–23 (STLPKPQRKTKRNTNRRPMDVK). The interaction with EIF2AK2/PKR stretch occupies residues 2-58 (STLPKPQRKTKRNTNRRPMDVKFPGGGQIVGGVYLLPRRGPRLGVRATRKTSERSQP). The interval 2–59 (STLPKPQRKTKRNTNRRPMDVKFPGGGQIVGGVYLLPRRGPRLGVRATRKTSERSQPR) is interaction with DDX3X. The tract at residues 2–75 (STLPKPQRKT…PKARQPQGRH (74 aa)) is disordered. Residues 2 to 168 (STLPKPQRKT…EDGINYATGN (167 aa)) lie on the Cytoplasmic side of the membrane. Short sequence motifs (nuclear localization signal) lie at residues 5-13 (PKPQRKTKR) and 38-43 (PRRGPR). A compositionally biased stretch (basic residues) spans 7 to 16 (PQRKTKRNTN). Positions 32–47 (GGVYLLPRRGPRLGVR) are enriched in low complexity. Ser53 bears the Phosphoserine; by host mark. 2 short sequence motifs (nuclear localization signal) span residues 58 to 64 (PRGRRQP) and 66 to 71 (PKARQP). Position 99 is a phosphoserine; by host (Ser99). Residues 112-152 (PRRRSRNLGKVIDTLTCGFADLMGYIPVVGAPLGGVAAALA) are important for endoplasmic reticulum and mitochondrial localization. At Ser116 the chain carries Phosphoserine; by host PKA. The tract at residues 122–173 (VIDTLTCGFADLMGYIPVVGAPLGGVAAALAHGVRAIEDGINYATGNLPGCS) is interaction with APOA2. An important for lipid droplets localization region spans residues 164 to 167 (YATG). A helical transmembrane segment spans residues 169–189 (LPGCSFSIFLLALLSCLTTPA). The propeptide at 178–191 (LLALLSCLTTPASA) is ER anchor for the core protein, removed in mature form by host signal peptidase. Residues 190 to 358 (SALTYGNSSG…FGGHWGILLA (169 aa)) are Lumenal-facing. N-linked (GlcNAc...) asparagine; by host glycans are attached at residues Asn196, Asn209, Asn234, and Asn250. The tract at residues 265–296 (LAGAAVVCSSLYIGDLCGSLFLAGQLFTFQPR) is important for fusion. Residue Asn305 is glycosylated (N-linked (GlcNAc...) asparagine; by host). Residues 359-379 (VAYFGMAGNWLKVLAVLFLFA) traverse the membrane as a helical segment. At 380 to 730 (GVEATTTVGH…WEYIVLMFLV (351 aa)) the chain is on the lumenal side. Residues 385–411 (TTVGHGVARTTAGITGLFSPGASQNLQ) form an HVR1 region. N-linked (GlcNAc...) asparagine; by host glycosylation is present at Asn415. N-linked (GlcNAc...) (high mannose) asparagine; by host glycans are attached at residues Asn422 and Asn429. 4 disulfides stabilise this stretch: Cys428–Cys553, Cys451–Cys458, Cys487–Cys495, and Cys504–Cys509. N-linked (GlcNAc...) asparagine; by host glycosylation occurs at Asn447. The segment at 474-479 (KVNISG) is HVR2. The N-linked (GlcNAc...) asparagine; by host glycan is linked to Asn476. A CD81-binding 1 region spans residues 481–494 (SDDRPYCWHYAPRP). Asn533 is a glycosylation site (N-linked (GlcNAc...) asparagine; by host). The CD81-binding 2 stretch occupies residues 545–552 (PPTGGWFG). N-linked (GlcNAc...) asparagine; by host glycosylation occurs at Asn557. The cysteines at positions 565 and 570 are disulfide-linked. Asn578 is a glycosylation site (N-linked (GlcNAc...) asparagine; by host). Disulfide bonds link Cys586-Cys590, Cys602-Cys625, and Cys612-Cys649. 2 N-linked (GlcNAc...) (high mannose) asparagine; by host glycosylation sites follow: Asn628 and Asn650. Cysteines 657 and 682 form a disulfide. The interval 665–676 (IEMSPLLFSTTQ) is PKR/eIF2-alpha phosphorylation homology domain (PePHD). A helical membrane pass occupies residues 731–751 (LADARICTCLWLMLLISNVEA). Topologically, residues 752–762 (AVERLVVLNAA) are lumenal. A helical membrane pass occupies residues 763-783 (SAAGTAGWWWAVLFLCCVWYV). Residues 784–786 (KGR) are Cytoplasmic-facing. A helical transmembrane segment spans residues 787–808 (LVPACTYMALGMWPLLLTILAL). Residues 809–818 (PHRAYAMDNE) are Lumenal-facing. Residues 819 to 839 (QAASLGAVGLLAITIFTITPT) form a helical membrane-spanning segment. Over 840 to 843 (YKKL) the chain is Cytoplasmic. A helical transmembrane segment spans residues 844 to 863 (LTCFIWWNQYFLARAEAMVH). Topologically, residues 864–886 (EWVPDLRVRGGRDSIILLTCLLH) are lumenal. The helical transmembrane segment at 887 to 907 (PQLGFEVTKILLAILAPLYIL) threads the bilayer. A Peptidase C18 domain is found at 908–1031 (QYSLLKVPYF…DMQRGGWKLL (124 aa)). The Cytoplasmic portion of the chain corresponds to 908 to 1662 (QYSLLKVPYF…CMSADLEVIT (755 aa)). The segment at 909 to 1211 (YSLLKVPYFV…PVENMETTMR (303 aa)) is protease NS2-3. The S-palmitoyl cysteine; by host moiety is linked to residue Cys927. The tract at residues 934 to 954 (AGGRYVQACLLRLGAWTGTFI) is interaction with host SCPS1. Catalysis depends on for protease NS2 activity; shared with dimeric partner residues His957, Glu977, and Cys998. A Peptidase S29 domain is found at 1032–1213 (APITAYAQQT…ENMETTMRSP (182 aa)). Catalysis depends on charge relay system; for serine protease NS3 activity residues His1088 and Asp1112. Residues Cys1128 and Cys1130 each coordinate Zn(2+). Residue Ser1170 is the Charge relay system; for serine protease NS3 activity of the active site. The Zn(2+) site is built by Cys1176 and His1180. The Helicase ATP-binding domain maps to 1222 to 1374 (PAVPQTYQVG…PNITETALPT (153 aa)). 1235-1242 (APTGSGKS) contacts ATP. 2 residues coordinate Mg(2+): Ser1242 and Glu1322. A DECH box motif is present at residues 1321–1324 (DECH). An RNA-binding region spans residues 1491 to 1503 (QRRGRTGRGKPGV). Residues 1663-1683 (STWVLVGGVLAALAAYCLSVG) form a helical membrane-spanning segment. Positions 1684–1695 (CVVICGRITLTG) are NS3-binding. The Cytoplasmic portion of the chain corresponds to 1684-1810 (CVVICGRITL…SLTSPLRTSQ (127 aa)). The helical transmembrane segment at 1811–1829 (TLLLNILGGWIAAQVAPPP) threads the bilayer. Topologically, residues 1830–1833 (ASTA) are lumenal. A helical membrane pass occupies residues 1834 to 1854 (FVVSGLAGAAVGSIRLGRVLV). A topological domain (cytoplasmic) is located at residue Asp1855. Residues 1856–1876 (VLAGYGAGVSGALVAFKIMSG) form a helical membrane-spanning segment. Residues 1877-1886 (DCPTTEDMVN) lie on the Lumenal side of the membrane. A helical membrane pass occupies residues 1887 to 1907 (LLPALLSPGALVVGVVCAAIL). Topologically, residues 1908 to 1977 (RRHVGPAEGA…WVNEDTATPC (70 aa)) are cytoplasmic. Residue Cys1977 is the site of S-palmitoyl cysteine; by host attachment. The stretch at 1978 to 2007 (ATSWLRDVWDWVCTVLSDFKVWLQAKLFPR) is an intramembrane region. Topologically, residues 2008-2998 (LPGIPFLSCQ…YHSVSQARPR (991 aa)) are cytoplasmic. Residues Cys2016, Cys2034, Cys2036, and Cys2057 each contribute to the Zn(2+) site. Residues 2125 to 2213 (EFFTEVDGVR…ASSSASQLSA (89 aa)) form an FKBP8-binding region. A transcriptional activation region spans residues 2125-2338 (EFFTEVDGVR…PIPPPRRKRL (214 aa)). The interaction with non-structural protein 4A stretch occupies residues 2140–2144 (PPCKP). The disordered stretch occupies residues 2189 to 2223 (ETASRRLKRGSPPSLASSSASQLSAPSLKATCTTS). The interval 2194–2446 (RLKRGSPPSL…ALITPCAAEE (253 aa)) is interaction with host SKP2. A Phosphoserine; by host; in p56 modification is found at Ser2199. Low complexity predominate over residues 2199–2216 (SPPSLASSSASQLSAPSL). Ser2202, Ser2206, Ser2209, Ser2212, and Ser2215 each carry phosphoserine; by host; in p58. Positions 2215–2254 (SLKATCTTSKDHPDMELIEANLLWRQEMGGNITRVESENK) are ISDR. Residues 2215-2280 (SLKATCTTSK…REISVSAECH (66 aa)) form an interaction with EIF2AK2/PKR region. Residues 2254–2312 (KVVVLDSFEPLTAEYDEREISVSAECHRPPRHKFPPALPIWARPDYNPPLLQAWQMPGY) form an NS4B-binding region. The tract at residues 2305–2383 (QAWQMPGYEP…SITSPDPPAP (79 aa)) is V3. An SH3-binding motif is present at residues 2328–2331 (APIP). A Nuclear localization signal motif is present at residues 2333-2341 (PRRKRLVHL). Residue Lys2356 forms a Glycyl lysine isopeptide (Lys-Gly) (interchain with G-Cter in ubiquitin) linkage. A disordered region spans residues 2359–2418 (VEGSSDPGPSSDSGLSITSPDPPAPTTPDDACSEAESYSSMPPLEGEPGDPDLSSGSWST). Residues 2361-2372 (GSSDPGPSSDSG) show a composition bias toward low complexity. 2 positions are modified to phosphoserine; by host: Ser2457 and Ser2470. Positions 2642 to 2760 (PMGFSYDTRC…ICESAGVQED (119 aa)) constitute a RdRp catalytic domain. 3 residues coordinate Mg(2+): Asp2648, Asp2746, and Asp2747. A helical membrane pass occupies residues 2999-3019 (LLLLGLLLLTVGVGIFLVPAR).

The protein belongs to the hepacivirus polyprotein family. Homooligomer. Interacts with E1 (via C-terminus). Interacts with the non-structural protein 5A. Interacts (via N-terminus) with host STAT1 (via SH2 domain); this interaction results in decreased STAT1 phosphorylation and ubiquitin-mediated proteasome-dependent STAT1 degradation, leading to decreased IFN-stimulated gene transcription. Interacts with host STAT3; this interaction constitutively activates STAT3. Interacts with host LTBR receptor. Interacts with host TNFRSF1A receptor and possibly induces apoptosis. Interacts with host HNRPK. Interacts with host YWHAE. Interacts with host UBE3A/E6AP. Interacts with host DDX3X. Interacts with host APOA2. Interacts with host RXRA protein. Interacts with host SP110 isoform 3/Sp110b; this interaction sequesters the transcriptional corepressor SP110 away from the nucleus. Interacts with host CREB3 nuclear transcription protein; this interaction triggers cell transformation. Interacts with host ACY3. Interacts with host C1QR1. Interacts with host RBM24; this interaction, which enhances the interaction of the mature core protein with 5'-UTR, may inhibit viral translation and favor replication. Interacts with host EIF2AK2/PKR; this interaction induces the autophosphorylation of EIF2AK2. Part of the viral assembly initiation complex composed of NS2, E1, E2, NS3, NS4A, NS5A and the mature core protein. As to quaternary structure, forms a heterodimer with envelope glycoprotein E2. Interacts with mature core protein. Interacts with protease NS2. The heterodimer E1/E2 interacts with host CLDN1; this interaction plays a role in viral entry into host cell. Interacts with host SPSB2 (via C-terminus). Part of the viral assembly initiation complex composed of NS2, E1, E2, NS3, NS4A, NS5A and the mature core protein. Interacts with host NEURL3; this interaction prevents E1 binding to glycoprotein E2. In terms of assembly, forms a heterodimer with envelope glycoprotein E1. Interacts with host CD81 and SCARB1 receptors; these interactions play a role in viral entry into host cell. Interacts with host EIF2AK2/PKR; this interaction inhibits EIF2AK2 and probably allows the virus to evade the innate immune response. Interacts with host CD209/DC-SIGN and CLEC4M/DC-SIGNR. Interact with host SPCS1; this interaction is essential for viral particle assembly. Interacts with protease NS2. The heterodimer E1/E2 interacts with host CLDN1; this interaction plays a role in viral entry into host cell. Part of the viral assembly initiation complex composed of NS2, E1, E2, NS3, NS4A, NS5A and the mature core protein. Interacts with host SLC3A2/4F2hc; the interaction may facilitate viral entry into host cell. Interacts with human PLSCR1. Homohexamer. Homoheptamer. Interacts with protease NS2. As to quaternary structure, homodimer. Interacts with host SPCS1; this interaction is essential for viral particle assembly. Interacts with envelope glycoprotein E1. Interacts with envelope glycoprotein E2. Interacts with viroporin p7. Interacts with serine protease/helicase NS3. Part of the replication complex composed of NS2, NS3, NS4A, NS4B, NS5A and the RNA-directed RNA polymerase embedded in an ER-derived membranous web. Part of the viral assembly initiation complex composed of NS2, E1, E2, NS3, NS4A, NS5A and the mature core protein. In terms of assembly, interacts with protease NS2. Interacts with non-structural protein 4A; this interaction stabilizes the folding of NS3 serine protease. NS3-NS4A interaction is essential for NS3 activation and allows membrane anchorage of the latter. NS3/NS4A complex also prevents phosphorylation of host IRF3, thus preventing the establishment of dsRNA induced antiviral state. Interacts with host MAVS; this interaction leads to the cleavage and inhibition of host MAVS. Interacts with host TICAM1; this interaction leads to the cleavage and inhibition of host TICAM1. Interacts with host TANK-binding kinase/TBK1; this interaction results in the inhibition of the association between TBK1 and IRF3, which leads to the inhibition of IRF3 activation. Interacts with host RBM24. Part of the replication complex composed of NS2, NS3, NS4A, NS4B, NS5A and the RNA-directed RNA polymerase embedded in an ER-derived membranous web. Part of the viral assembly initiation complex composed of NS2, E1, E2, NS3, NS4A, NS5A and the mature core protein. Interacts with NS3 serine protease; this interaction stabilizes the folding of NS3 serine protease. NS3-NS4A interaction is essential for NS3 activation and allows membrane anchorage of the latter. Interacts with non-structural protein 5A (via N-terminus). Part of the replication complex composed of NS2, NS3, NS4A, NS4B, NS5A and the RNA-directed RNA polymerase embedded in an ER-derived membranous web. Part of the viral assembly initiation complex composed of NS2, E1, E2, NS3, NS4A, NS5A and the mature core protein. As to quaternary structure, homomultimer. Interacts with non-structural protein NS5A. Interacts with host PLA2G4C; this interaction likely initiates the recruitment of replication complexes to lipid droplets. Interacts with host STING; this interaction disrupts the interaction between STING and TBK1 thereby suppressing the interferon signaling. Part of the replication complex composed of NS2, NS3, NS4A, NS4B, NS5A and the RNA-directed RNA polymerase embedded in an ER-derived membranous web. In terms of assembly, monomer. Homodimer; dimerization is required for RNA-binding. Interacts with the mature core protein. Interacts (via N-terminus) with non-structural protein 4A. Interacts with non-structural protein 4B. Interacts (via region D2) with RNA-directed RNA polymerase. Part of the viral assembly initiation complex composed of NS2, E1, E2, NS3, NS4A, NS5A and the mature core protein. Part of the replication complex composed of NS2, NS3, NS4A, NS4B, NS5A and the RNA-directed RNA polymerase embedded in an ER-derived membranous web. Interacts with host GRB2. Interacts with host BIN1. Interacts with host PIK3R1. Interacts with host SRCAP. Interacts with host FKBP8. Interacts (via C-terminus) with host VAPB (via MSP domain). Interacts with host EIF2AK2/PKR; this interaction leads to disruption of EIF2AK2 dimerization by NS5A and probably allows the virus to evade the innate immune response. Interacts (via N-terminus) with host PACSIN2 (via N-terminus); this interaction attenuates protein kinase C alpha-mediated phosphorylation of PACSIN2 by disrupting the interaction between PACSIN2 and PRKCA. Interacts (via N-terminus) with host SRC kinase (via SH2 domain). Interacts with most Src-family kinases. Interacts with host IFI27 and SKP2; promotes the ubiquitin-mediated proteasomal degradation of NS5A. Interacts with host GPS2. Interacts with host TNFRSF21; this interaction allows the modulation by the virus of JNK, p38 MAPK, STAT3, and Akt signaling pathways in a DR6-dependent manner. Interacts (via N-terminus) with host CIDEB (via N-terminus); this interaction seems to regulate the association of HCV particles with APOE. Interacts with host CHKA/Choline Kinase-alpha; CHKA bridges host PI4KA and NS5A and potentiates NS5A-stimulated PI4KA activity, which then facilitates the targeting of the ternary complex to the ER for viral replication. Interacts with host SPSB2 (via C-terminus); this interaction targets NS5A for ubiquitination and degradation. Interacts with host RAB18; this interaction may promote the association of NS5A and other replicase components with lipid droplets. Interacts (via region D2) with host PPIA/CYPA; the interaction stimulates RNA-binding ability of NS5A and is dependent on the peptidyl-prolyl cis-trans isomerase activity of PPIA/CYPA. Interacts with host TRIM14; this interaction induces the degradation of NS5A. Homooligomer. Interacts with non-structural protein 5A. Interacts with host VAPB. Interacts with host PRK2/PKN2. Interacts with host HNRNPA1 and SEPT6; these interactions facilitate viral replication. Part of the replication complex composed of NS2, NS3, NS4A, NS4B, NS5A and the RNA-directed RNA polymerase. It depends on Zn(2+) as a cofactor. Mg(2+) serves as cofactor. Post-translationally, specific enzymatic cleavages in vivo yield mature proteins. The structural proteins, core, E1, E2 and p7 are produced by proteolytic processing by host signal peptidases. The core protein precursor is synthesized as a 23 kDa, which is retained in the ER membrane through the hydrophobic signal peptide. Cleavage by the signal peptidase releases the 21 kDa mature core protein. The cleavage of the core protein precursor occurs between aminoacids 176 and 188 but the exact cleavage site is not known. Some degraded forms of the core protein appear as well during the course of infection. The other proteins (p7, NS2, NS3, NS4A, NS4B, NS5A and NS5B) are cleaved by the viral proteases. Autoprocessing between NS2 and NS3 is mediated by the NS2 cysteine protease catalytic domain and regulated by the NS3 N-terminal domain. In terms of processing, phosphorylated by host PKC and PKA. Ubiquitinated; mediated by UBE3A and leading to core protein subsequent proteasomal degradation. Post-translationally, highly N-glycosylated. In terms of processing, palmitoylation is required for NS2/3 autoprocessing and E2 recruitment to membranes. Palmitoylated. This modification may play a role in its polymerization or in protein-protein interactions. Post-translationally, phosphorylated on serines in a basal form termed p56. p58 is a hyperphosphorylated form of p56. p56 and p58 coexist in the cell in roughly equivalent amounts. Hyperphosphorylation is dependent on the presence of NS4A. Host CSNK1A1/CKI-alpha or RPS6KB1 kinases may be responsible for NS5A phosphorylation. In terms of processing, tyrosine phosphorylation is essential for the interaction with host SRC. The N-terminus is phosphorylated by host PRK2/PKN2.

The protein localises to the host endoplasmic reticulum membrane. It localises to the host mitochondrion membrane. It is found in the virion. Its subcellular location is the host cytoplasm. The protein resides in the host nucleus. The protein localises to the host lipid droplet. It localises to the virion membrane. It is found in the host mitochondrion. Its subcellular location is the host cell membrane. The protein resides in the host perinuclear region. The enzyme catalyses Hydrolysis of four peptide bonds in the viral precursor polyprotein, commonly with Asp or Glu in the P6 position, Cys or Thr in P1 and Ser or Ala in P1'.. It carries out the reaction a ribonucleoside 5'-triphosphate + H2O = a ribonucleoside 5'-diphosphate + phosphate + H(+). It catalyses the reaction ATP + H2O = ADP + phosphate + H(+). The catalysed reaction is RNA(n) + a ribonucleoside 5'-triphosphate = RNA(n+1) + diphosphate. Its activity is regulated as follows. Inhibited by the antiviral drug hexamethylene amiloride. Inhibition by amantadine appears to be genotype-dependent. Also inhibited by long-alkyl-chain iminosugar derivatives. Activity is up-regulated by PRK2/PKN2-mediated phosphorylation. Functionally, packages viral RNA to form a viral nucleocapsid, and promotes virion budding. Participates in the viral particle production as a result of its interaction with the non-structural protein 5A. Binds RNA and may function as a RNA chaperone to induce the RNA structural rearrangements taking place during virus replication. Modulates viral translation initiation by interacting with viral IRES and 40S ribosomal subunit. Affects various cell signaling pathways, host immunity and lipid metabolism. Prevents the establishment of cellular antiviral state by blocking the interferon-alpha/beta (IFN-alpha/beta) and IFN-gamma signaling pathways and by blocking the formation of phosphorylated STAT1 and promoting ubiquitin-mediated proteasome-dependent degradation of STAT1. Activates STAT3 leading to cellular transformation. Regulates the activity of cellular genes, including c-myc and c-fos. May repress the promoter of p53, and sequester CREB3 and SP110 isoform 3/Sp110b in the cytoplasm. Represses cell cycle negative regulating factor CDKN1A, thereby interrupting an important check point of normal cell cycle regulation. Targets transcription factors involved in the regulation of inflammatory responses and in the immune response: suppresses TNF-induced NF-kappa-B activation, and activates AP-1. Binds to dendritic cells (DCs) via C1QR1, resulting in down-regulation of T-lymphocytes proliferation. Alters lipid metabolism by interacting with hepatocellular proteins involved in lipid accumulation and storage. Induces up-regulation of FAS promoter activity, and thereby contributes to the increased triglyceride accumulation in hepatocytes (steatosis). In terms of biological role, forms a heterodimer with envelope glycoprotein E2, which mediates virus attachment to the host cell, virion internalization through clathrin-dependent endocytosis and fusion with host membrane. Fusion with the host cell is most likely mediated by both E1 and E2, through conformational rearrangements of the heterodimer required for fusion rather than a classical class II fusion mechanism. E1/E2 heterodimer binds host apolipoproteins such as APOB and ApoE thereby forming a lipo-viro-particle (LVP). APOE associated to the LVP allows the initial virus attachment to cell surface receptors such as the heparan sulfate proteoglycans (HSPGs), syndecan-1 (SDC1), syndecan-1 (SDC2), the low-density lipoprotein receptor (LDLR) and scavenger receptor class B type I (SCARB1). The cholesterol transfer activity of SCARB1 allows E2 exposure and binding of E2 to SCARB1 and the tetraspanin CD81. E1/E2 heterodimer binding on CD81 activates the epithelial growth factor receptor (EGFR) signaling pathway. Diffusion of the complex E1-E2-EGFR-SCARB1-CD81 to the cell lateral membrane allows further interaction with Claudin 1 (CLDN1) and occludin (OCLN) to finally trigger HCV entry. Its function is as follows. Forms a heterodimer with envelope glycoprotein E1, which mediates virus attachment to the host cell, virion internalization through clathrin-dependent endocytosis and fusion with host membrane. Fusion with the host cell is most likely mediated by both E1 and E2, through conformational rearrangements of the heterodimer required for fusion rather than a classical class II fusion mechanism. The interaction between envelope glycoprotein E2 and host apolipoprotein E/APOE allows the proper assembly, maturation and infectivity of the viral particles. This interaction is probably promoted via the up-regulation of cellular autophagy by the virus. E1/E2 heterodimer binds host apolipoproteins such as APOB and APOE thereby forming a lipo-viro-particle (LVP). APOE associated to the LVP allows the initial virus attachment to cell surface receptors such as the heparan sulfate proteoglycans (HSPGs), syndecan-1 (SDC1), syndecan-1 (SDC2), the low-density lipoprotein receptor (LDLR) and scavenger receptor class B type I (SCARB1). The cholesterol transfer activity of SCARB1 allows E2 exposure and binding of E2 to SCARB1 and the tetraspanin CD81. E1/E2 heterodimer binding on CD81 activates the epithelial growth factor receptor (EGFR) signaling pathway. Diffusion of the complex E1-E2-EGFR-SCARB1-CD81 to the cell lateral membrane allows further interaction with Claudin 1 (CLDN1) and occludin (OCLN) to finally trigger HCV entry. Inhibits host EIF2AK2/PKR activation, preventing the establishment of an antiviral state. Viral ligand for CD209/DC-SIGN and CLEC4M/DC-SIGNR, which are respectively found on dendritic cells (DCs), and on liver sinusoidal endothelial cells and macrophage-like cells of lymph node sinuses. These interactions allow the capture of circulating HCV particles by these cells and subsequent facilitated transmission to permissive cells such as hepatocytes and lymphocyte subpopulations. The interaction between E2 and host amino acid transporter complex formed by SLC3A2 and SLC7A5/LAT1 may facilitate viral entry into host cell. Ion channel protein that acts as a viroporin and plays an essential role in the assembly, envelopment and secretion of viral particles. Regulates the host cell secretory pathway, which induces the intracellular retention of viral glycoproteins and favors assembly of viral particles. Creates a pore in acidic organelles and releases Ca(2+) and H(+) in the cytoplasm of infected cells, leading to a productive viral infection. High levels of cytoplasmic Ca(2+) may trigger membrane trafficking and transport of viral ER-associated proteins to viroplasms, sites of viral genome replication. This ionic imbalance induces the assembly of the inflammasome complex, which triggers the maturation of pro-IL-1beta into IL-1beta through the action of caspase-1. Targets also host mitochondria and induces mitochondrial depolarization. In addition of its role as a viroporin, acts as a lipid raft adhesion factor. Functionally, cysteine protease required for the proteolytic auto-cleavage between the non-structural proteins NS2 and NS3. The N-terminus of NS3 is required for the function of NS2 protease (active region NS2-3). Promotes the initiation of viral particle assembly by mediating the interaction between structural and non-structural proteins. In terms of biological role, displays three enzymatic activities: serine protease with a chymotrypsin-like fold, NTPase and RNA helicase. NS3 serine protease, in association with NS4A, is responsible for the cleavages of NS3-NS4A, NS4A-NS4B, NS4B-NS5A and NS5A-NS5B. The NS3/NS4A complex prevents phosphorylation of host IRF3, thus preventing the establishment of dsRNA induced antiviral state. The NS3/NS4A complex induces host amino acid transporter component SLC3A2, thus contributing to HCV propagation. NS3 RNA helicase binds to RNA and unwinds both dsDNA and dsRNA in the 3' to 5' direction, and likely resolves RNA complicated stable secondary structures in the template strand. Binds a single ATP and catalyzes the unzipping of a single base pair of dsRNA. Inhibits host antiviral proteins TBK1 and IRF3 thereby preventing the establishment of an antiviral state. Cleaves host MAVS/CARDIF thereby preventing the establishment of an antiviral state. Cleaves host TICAM1/TRIF, thereby disrupting TLR3 signaling and preventing the establishment of an antiviral state. Its function is as follows. Induces a specific membrane alteration that serves as a scaffold for the virus replication complex. This membrane alteration gives rise to the so-called ER-derived membranous web that contains the replication complex. NS4B self-interaction contributes to its function in membranous web formation. Promotes host TRIF protein degradation in a CASP8-dependent manner thereby inhibiting host TLR3-mediated interferon signaling. Disrupts the interaction between STING and TBK1 contributing to the inhibition of interferon signaling. Phosphorylated protein that is indispensable for viral replication and assembly. Both hypo- and hyperphosphorylated states are required for the viral life cycle. The hyperphosphorylated form of NS5A is an inhibitor of viral replication. Involved in RNA-binding and especially in binding to the viral genome. Zinc is essential for RNA-binding. Participates in the viral particle production as a result of its interaction with the mature viral core protein. Its interaction with host VAPB may target the viral replication complex to vesicles. Down-regulates viral IRES translation initiation. Mediates interferon resistance, presumably by interacting with and inhibiting host EIF2AK2/PKR. Prevents BIN1-induced apoptosis. Acts as a transcriptional activator of some host genes important for viral replication when localized in the nucleus. Via the interaction with host PACSIN2, modulates lipid droplet formation in order to promote virion assembly. Modulates TNFRSF21/DR6 signaling pathway for viral propagation. Functionally, RNA-dependent RNA polymerase that performs primer-template recognition and RNA synthesis during viral replication. Initiates RNA transcription/replication at a flavin adenine dinucleotide (FAD), resulting in a 5'- FAD cap on viral RNAs. In this way, recognition of viral 5' RNA by host pattern recognition receptors can be bypassed, thereby evading activation of antiviral pathways. This chain is Genome polyprotein, found in Hepatitis C virus genotype 6a (isolate 6a33) (HCV).